Here is a 365-residue protein sequence, read N- to C-terminus: tRNA(Met) cytidine acetate ligase (365 aa).

Residues 7-20 (IAEFNPFHNGHKYL), glycine 96, asparagine 152, and arginine 175 contribute to the ATP site.

It belongs to the TmcAL family.

It is found in the cytoplasm. It catalyses the reaction cytidine(34) in elongator tRNA(Met) + acetate + ATP = N(4)-acetylcytidine(34) in elongator tRNA(Met) + AMP + diphosphate. In terms of biological role, catalyzes the formation of N(4)-acetylcytidine (ac(4)C) at the wobble position of elongator tRNA(Met), using acetate and ATP as substrates. First activates an acetate ion to form acetyladenylate (Ac-AMP) and then transfers the acetyl group to tRNA to form ac(4)C34. The chain is tRNA(Met) cytidine acetate ligase from Streptococcus pneumoniae (strain ATCC BAA-255 / R6).